Here is a 386-residue protein sequence, read N- to C-terminus: Methionine aminopeptidase 1 (386 aa).

Position 2 is an N-acetylalanine (Ala2). The segment at 6–59 adopts a C6H2-type zinc-finger fold; it reads TRVCETDGCSSEAKLQCPTCIKLGIQGSYFCSQECFKGSWATHKLLHKKAKDEK. Zn(2+) is bound by residues Cys9, Cys14, Cys22, Cys25, Cys36, Cys40, His48, and His52. His203 lines the a protein pocket. Asp220, Asp231, and His294 together coordinate Zn(2+). His301 lines the a protein pocket. 2 residues coordinate Zn(2+): Glu327 and Glu358.

Belongs to the peptidase M24A family. Methionine aminopeptidase type 1 subfamily. Associates with the 60S ribosomal subunit of the 80S translational complex. Zn(2+) is required as a cofactor. The cofactor is Co(2+). It depends on Mn(2+) as a cofactor. Requires Fe(2+) as cofactor.

It is found in the cytoplasm. It carries out the reaction Release of N-terminal amino acids, preferentially methionine, from peptides and arylamides.. Cotranslationally removes the N-terminal methionine from nascent proteins. The N-terminal methionine is often cleaved when the second residue in the primary sequence is small and uncharged (Met-Ala-, Cys, Gly, Pro, Ser, Thr, or Val). The sequence is that of Methionine aminopeptidase 1 (METAP1) from Pongo abelii (Sumatran orangutan).